A 125-amino-acid polypeptide reads, in one-letter code: Large ribosomal subunit protein bL12 (125 aa).

The disordered stretch occupies residues 96–125 (PAPVKEGATKDEAEEIKKKIEEAGGTAELK). Residues 102 to 117 (GATKDEAEEIKKKIEE) show a composition bias toward basic and acidic residues.

It belongs to the bacterial ribosomal protein bL12 family. As to quaternary structure, homodimer. Part of the ribosomal stalk of the 50S ribosomal subunit. Forms a multimeric L10(L12)X complex, where L10 forms an elongated spine to which 2 to 4 L12 dimers bind in a sequential fashion. Binds GTP-bound translation factors.

Its function is as follows. Forms part of the ribosomal stalk which helps the ribosome interact with GTP-bound translation factors. Is thus essential for accurate translation. The polypeptide is Large ribosomal subunit protein bL12 (Alcanivorax borkumensis (strain ATCC 700651 / DSM 11573 / NCIMB 13689 / SK2)).